A 420-amino-acid chain; its full sequence is Serine hydroxymethyltransferase (420 aa).

Residues L121 and 125–127 each bind (6S)-5,6,7,8-tetrahydrofolate; that span reads GHL. An N6-(pyridoxal phosphate)lysine modification is found at K230.

This sequence belongs to the SHMT family. As to quaternary structure, homodimer. The cofactor is pyridoxal 5'-phosphate.

The protein resides in the cytoplasm. The catalysed reaction is (6R)-5,10-methylene-5,6,7,8-tetrahydrofolate + glycine + H2O = (6S)-5,6,7,8-tetrahydrofolate + L-serine. It functions in the pathway one-carbon metabolism; tetrahydrofolate interconversion. Its pathway is amino-acid biosynthesis; glycine biosynthesis; glycine from L-serine: step 1/1. Functionally, catalyzes the reversible interconversion of serine and glycine with tetrahydrofolate (THF) serving as the one-carbon carrier. This reaction serves as the major source of one-carbon groups required for the biosynthesis of purines, thymidylate, methionine, and other important biomolecules. Also exhibits THF-independent aldolase activity toward beta-hydroxyamino acids, producing glycine and aldehydes, via a retro-aldol mechanism. The protein is Serine hydroxymethyltransferase of Streptomyces avermitilis (strain ATCC 31267 / DSM 46492 / JCM 5070 / NBRC 14893 / NCIMB 12804 / NRRL 8165 / MA-4680).